The chain runs to 478 residues: Lysosome membrane protein 2 (478 aa).

Topologically, residues 1–4 are cytoplasmic; it reads MGRC. A helical transmembrane segment spans residues 5-27; sequence CFYTAGTLSLLLLVTSVTLLVAR. The Lumenal portion of the chain corresponds to 28 to 433; the sequence is VFQKAVDQSI…RLKSMINTTL (406 aa). N45, N68, and N105 each carry an N-linked (GlcNAc...) asparagine glycan. Residues 155-191 are important for interaction with GBA1; the sequence is IIEAMLKAYQQKLFVTHTVDELLWGYKDEILSLIHVF. 4 N-linked (GlcNAc...) asparagine glycosylation sites follow: N206, N224, N249, and N304. 2 disulfides stabilise this stretch: C274–C329 and C312–C318. N-linked (GlcNAc...) asparagine glycans are attached at residues N325, N412, and N430. The chain crosses the membrane as a helical span at residues 434–459; the sequence is IITNIPYIIMALGVFFGLVFTWLACK. Residues 460–478 are Cytoplasmic-facing; it reads GQGSMDEGTADERAPLIRT.

The protein belongs to the CD36 family. Interacts with GBA1. In terms of assembly, (Microbial infection) Interacts with enterovirus 71 capsid proteins VP1 and VP2.

Its subcellular location is the lysosome membrane. Its function is as follows. Acts as a lysosomal receptor for glucosylceramidase (GBA1) targeting. (Microbial infection) Acts as a receptor for enterovirus 71. This is Lysosome membrane protein 2 (SCARB2) from Homo sapiens (Human).